A 201-amino-acid chain; its full sequence is Thylakoid membrane protein slr1796 (201 aa).

The helical transmembrane segment at 16-36 (FLIVSLAFAMLLLGIWGTLPF) threads the bilayer.

The protein resides in the cellular thylakoid membrane. This chain is Thylakoid membrane protein slr1796, found in Synechocystis sp. (strain ATCC 27184 / PCC 6803 / Kazusa).